The primary structure comprises 387 residues: uncharacterized protein (387 aa).

The chain crosses the membrane as a helical span at residues 5–25 (FVLFSFPFLLLSSMLIFYQTT).

This sequence belongs to the LicD transferase family.

Its subcellular location is the membrane. This is an uncharacterized protein from Caenorhabditis elegans.